The sequence spans 266 residues: Acetyl esterase (266 aa).

The chain is Acetyl esterase (xynC) from Caldicellulosiruptor saccharolyticus (Caldocellum saccharolyticum).